We begin with the raw amino-acid sequence, 408 residues long: Argininosuccinate synthase (408 aa).

Residues 10-18 and Ala-37 contribute to the ATP site; that span reads AYSGGLDTS. L-citrulline-binding residues include Tyr-90 and Ser-95. Gly-120 contributes to the ATP binding site. Residues Thr-122, Asn-126, and Asp-127 each contribute to the L-aspartate site. Asn-126 is a binding site for L-citrulline. 5 residues coordinate L-citrulline: Arg-130, Ser-182, Ser-191, Glu-267, and Tyr-279.

This sequence belongs to the argininosuccinate synthase family. Type 1 subfamily. In terms of assembly, homotetramer.

The protein localises to the cytoplasm. It catalyses the reaction L-citrulline + L-aspartate + ATP = 2-(N(omega)-L-arginino)succinate + AMP + diphosphate + H(+). The protein operates within amino-acid biosynthesis; L-arginine biosynthesis; L-arginine from L-ornithine and carbamoyl phosphate: step 2/3. In Paraburkholderia phytofirmans (strain DSM 17436 / LMG 22146 / PsJN) (Burkholderia phytofirmans), this protein is Argininosuccinate synthase.